The sequence spans 221 residues: Probable molybdenum cofactor guanylyltransferase (221 aa).

GTP contacts are provided by residues 17 to 19 (LAG), Lys-29, Asp-74, and Asp-103. Residue Asp-103 coordinates Mg(2+).

This sequence belongs to the MobA family. It depends on Mg(2+) as a cofactor.

Its subcellular location is the cytoplasm. The enzyme catalyses Mo-molybdopterin + GTP + H(+) = Mo-molybdopterin guanine dinucleotide + diphosphate. Its function is as follows. Transfers a GMP moiety from GTP to Mo-molybdopterin (Mo-MPT) cofactor (Moco or molybdenum cofactor) to form Mo-molybdopterin guanine dinucleotide (Mo-MGD) cofactor. The protein is Probable molybdenum cofactor guanylyltransferase of Peptoclostridium acidaminophilum (Eubacterium acidaminophilum).